The primary structure comprises 248 residues: Indole-3-glycerol phosphate synthase (248 aa).

This sequence belongs to the TrpC family.

It catalyses the reaction 1-(2-carboxyphenylamino)-1-deoxy-D-ribulose 5-phosphate + H(+) = (1S,2R)-1-C-(indol-3-yl)glycerol 3-phosphate + CO2 + H2O. It participates in amino-acid biosynthesis; L-tryptophan biosynthesis; L-tryptophan from chorismate: step 4/5. The protein is Indole-3-glycerol phosphate synthase of Sulfolobus acidocaldarius (strain ATCC 33909 / DSM 639 / JCM 8929 / NBRC 15157 / NCIMB 11770).